The following is an 807-amino-acid chain: Mechanosensitive cation channel TMEM63A (807 aa).

Residues 1–51 (MMDSPFLELWQSKAVSIREQLGLGDRPNDSYCYNSAKNSTVLQGVTFGGIP) lie on the Extracellular side of the membrane. N38 is a glycosylation site (N-linked (GlcNAc...) asparagine). The chain crosses the membrane as a helical span at residues 52 to 74 (TVLLIDVSCFLFLILVFSIIRRR). Residues 75–134 (FWDYGRIALVSEADSESRFQRLSSTSSSGQQDFENELGCCPWLTAIFRLHDDQILEWCGE) lie on the Cytoplasmic side of the membrane. The helical transmembrane segment at 135 to 167 (DAIHYLSFQRHIIFLLVVVSFLSLCVILPVNLS) threads the bilayer. The Extracellular portion of the chain corresponds to 168 to 191 (GDLLDKDPYSFGRTTIANLQTDND). Residues 192-217 (LLWLHTIFAVIYLFLTVGFMRHHTQS) traverse the membrane as a helical segment. The Cytoplasmic segment spans residues 218 to 416 (IKYKEENLVR…CWKNLSIQGL (199 aa)). The segment at 219 to 414 (KYKEENLVRR…DICWKNLSIQ (196 aa)) is intracellular linker IL2; confers mechanosensitivity. A helical membrane pass occupies residues 417 to 444 (RWWLQWLGINFTLFLGLFFLTTPSIILS). Topologically, residues 445–462 (TMDKFNVTKPIHALNNPI) are extracellular. N450 is a glycosylation site (N-linked (GlcNAc...) asparagine). The helical transmembrane segment at 463–490 (ISQFFPTLLLWSFSALLPSIVYYSTLLE) threads the bilayer. Topologically, residues 491–495 (SHWTK) are cytoplasmic. A helical membrane pass occupies residues 496-532 (SGENQIMMTKVYIFLIFMVLILPSLGLTSLDFFFRWL). At 533–554 (FDKTSSEASIRLECVFLPDQGA) the chain is on the extracellular side. The chain crosses the membrane as a helical span at residues 555–586 (FFVNYVIASAFIGNGMELLRLPGLILYTFRMI). Positions 555-586 (FFVNYVIASAFIGNGMELLRLPGLILYTFRMI) are gating helix. At 587–606 (MAKTAADRRNVKQNQAFQYE) the chain is on the cytoplasmic side. The helical transmembrane segment at 607–624 (FGAMYAWMLCVFTVIVAY) threads the bilayer. At 625–628 (SITC) the chain is on the extracellular side. Residues 629–651 (PIIAPFGLIYILLKHMVDRHNLY) traverse the membrane as a helical segment. Residues 652 to 661 (FVYLPAKLEK) are Cytoplasmic-facing. A helical membrane pass occupies residues 662–689 (GIHFAAVNQALAAPILCLFWLYFFSFLR). Residues 690–694 (LGMKA) are Extracellular-facing. The chain crosses the membrane as a helical span at residues 695–709 (PATLFTFLVLLLTIL). Over 710–807 (VCLAHTCFGC…GSVAAAPQEA (98 aa)) the chain is Cytoplasmic. S739 bears the Phosphoserine mark.

It belongs to the CSC1 (TC 1.A.17) family. In terms of assembly, monomer. In terms of processing, N-Glycosylated.

The protein localises to the lysosome membrane. It is found in the early endosome membrane. The protein resides in the cell membrane. The catalysed reaction is Ca(2+)(in) = Ca(2+)(out). Functionally, mechanosensitive cation channel with low conductance and high activation threshold. In contrast to TMEM63B, does not show phospholipid scramblase activity. Acts as a regulator of lysosomal morphology by mediating lysosomal mechanosensitivity. Important for the baby's first breath and respiration throughout life. Upon lung inflation conducts cation currents in alveolar type 1 and 2 cells triggering lamellar body exocytosis and surfactant secretion into airspace. Also acts as an osmosensitive cation channel preferentially activated by hypotonic stress. In Homo sapiens (Human), this protein is Mechanosensitive cation channel TMEM63A.